Reading from the N-terminus, the 379-residue chain is Glutamate 5-kinase (379 aa).

An ATP-binding site is contributed by Lys-20. Ser-59, Asp-146, and Asn-158 together coordinate substrate. 220-226 is an ATP binding site; that stretch reads SGGMYSK. One can recognise a PUA domain in the interval 285-362; that stretch reads TGSVVVDDGA…AELTAILGDN (78 aa).

Belongs to the glutamate 5-kinase family.

Its subcellular location is the cytoplasm. The enzyme catalyses L-glutamate + ATP = L-glutamyl 5-phosphate + ADP. The protein operates within amino-acid biosynthesis; L-proline biosynthesis; L-glutamate 5-semialdehyde from L-glutamate: step 1/2. Catalyzes the transfer of a phosphate group to glutamate to form L-glutamate 5-phosphate. This chain is Glutamate 5-kinase, found in Oleidesulfovibrio alaskensis (strain ATCC BAA-1058 / DSM 17464 / G20) (Desulfovibrio alaskensis).